Consider the following 311-residue polypeptide: tRNA dimethylallyltransferase (311 aa).

Glycine 10 to threonine 17 contacts ATP. Threonine 12–threonine 17 contacts substrate. Interaction with substrate tRNA stretches follow at residues aspartate 35 to leucine 38, glutamine 159 to arginine 163, and arginine 240 to arginine 245.

The protein belongs to the IPP transferase family. In terms of assembly, monomer. Mg(2+) is required as a cofactor.

The enzyme catalyses adenosine(37) in tRNA + dimethylallyl diphosphate = N(6)-dimethylallyladenosine(37) in tRNA + diphosphate. In terms of biological role, catalyzes the transfer of a dimethylallyl group onto the adenine at position 37 in tRNAs that read codons beginning with uridine, leading to the formation of N6-(dimethylallyl)adenosine (i(6)A). This Haemophilus influenzae (strain PittEE) protein is tRNA dimethylallyltransferase.